The chain runs to 337 residues: 1-aminocyclopropane-1-carboxylate deaminase (337 aa).

Residue Lys50 is modified to N6-(pyridoxal phosphate)lysine. Residue Ser77 is the Nucleophile of the active site.

Belongs to the ACC deaminase/D-cysteine desulfhydrase family. In terms of assembly, homotrimer. Pyridoxal 5'-phosphate is required as a cofactor.

It carries out the reaction 1-aminocyclopropane-1-carboxylate + H2O = 2-oxobutanoate + NH4(+). Catalyzes a cyclopropane ring-opening reaction, the irreversible conversion of 1-aminocyclopropane-1-carboxylate (ACC) to ammonia and alpha-ketobutyrate. Allows growth on ACC as a nitrogen source. The chain is 1-aminocyclopropane-1-carboxylate deaminase from Methylobacterium nodulans (strain LMG 21967 / CNCM I-2342 / ORS 2060).